The sequence spans 112 residues: ATP-dependent Clp protease adapter protein ClpS (112 aa).

Belongs to the ClpS family. As to quaternary structure, binds to the N-terminal domain of the chaperone ClpA.

In terms of biological role, involved in the modulation of the specificity of the ClpAP-mediated ATP-dependent protein degradation. The chain is ATP-dependent Clp protease adapter protein ClpS from Rhodococcus jostii (strain RHA1).